A 201-amino-acid polypeptide reads, in one-letter code: Protease (201 aa).

Active-site residues include histidine 55, aspartate 72, and cysteine 122.

This sequence belongs to the peptidase C5 family. In terms of assembly, interacts with protease cofactor pVI-C; this interaction is necessary for protease activation.

It localises to the virion. Its subcellular location is the host nucleus. It carries out the reaction Cleaves proteins of the adenovirus and its host cell at two consensus sites: -Yaa-Xaa-Gly-Gly-|-Xaa- and -Yaa-Xaa-Gly-Xaa-|-Gly- (in which Yaa is Met, Ile or Leu, and Xaa is any amino acid).. With respect to regulation, requires DNA and protease cofactor for maximal activation. Inside nascent virions, becomes partially activated by binding to the viral DNA, allowing it to cleave the cofactor that binds to the protease and fully activates it. Actin, like the viral protease cofactor, seems to act as a cofactor in the cleavage of cytokeratin 18 and of actin itself. Cleaves viral precursor proteins (pTP, pIIIa, pVI, pVII, pVIII, and pX) inside newly assembled particles giving rise to mature virions. Protease complexed to its cofactor slides along the viral DNA to specifically locate and cleave the viral precursors. Mature virions have a weakened organization compared to the unmature virions, thereby facilitating subsequent uncoating. Without maturation, the particle lacks infectivity and is unable to uncoat. Late in adenovirus infection, in the cytoplasm, may participate in the cytoskeleton destruction. Cleaves host cell cytoskeletal keratins K7 and K18. The protein is Protease of Ovis aries (Sheep).